Consider the following 119-residue polypeptide: UPF0102 protein Athe_0977 (119 aa).

This sequence belongs to the UPF0102 family.

The protein is UPF0102 protein Athe_0977 of Caldicellulosiruptor bescii (strain ATCC BAA-1888 / DSM 6725 / KCTC 15123 / Z-1320) (Anaerocellum thermophilum).